The sequence spans 99 residues: Ubiquitin-related modifier 1 (99 aa).

Glycine 99 carries the post-translational modification 1-thioglycine. A Glycyl lysine isopeptide (Gly-Lys) (interchain with K-? in acceptor proteins) cross-link involves residue glycine 99.

It belongs to the URM1 family. Post-translationally, C-terminal thiocarboxylation occurs in 2 steps, it is first acyl-adenylated (-COAMP) via the hesA/moeB/thiF part of UBA4, then thiocarboxylated (-COSH) via the rhodanese domain of UBA4.

The protein localises to the cytoplasm. The protein operates within tRNA modification; 5-methoxycarbonylmethyl-2-thiouridine-tRNA biosynthesis. Its function is as follows. Acts as a sulfur carrier required for 2-thiolation of mcm(5)S(2)U at tRNA wobble positions of cytosolic tRNA(Lys), tRNA(Glu) and tRNA(Gln). Serves as sulfur donor in tRNA 2-thiolation reaction by being thiocarboxylated (-COSH) at its C-terminus by the MOCS3 homolog UBA4. The sulfur is then transferred to tRNA to form 2-thiolation of mcm(5)S(2)U. Prior mcm(5) tRNA modification by the elongator complex is required for 2-thiolation. Also acts as a ubiquitin-like protein (UBL) that is covalently conjugated via an isopeptide bond to lysine residues of target proteins such as AHP1. The thiocarboxylated form serves as substrate for conjugation and oxidative stress specifically induces the formation of UBL-protein conjugates. In Yarrowia lipolytica (strain CLIB 122 / E 150) (Yeast), this protein is Ubiquitin-related modifier 1.